Reading from the N-terminus, the 37-residue chain is Putative preoptic regulatory factor 1 (37 aa).

2 consecutive propeptides follow at residues 1 to 7 (MPYSLQP) and 18 to 37 (FPLC…PPDL).

The protein belongs to the GnRH family. In terms of tissue distribution, preoptic area and testis.

The protein resides in the secreted. In terms of biological role, precursor for a gonadotropin regulatory hormone (GNRH) related decapeptide. The polypeptide is Putative preoptic regulatory factor 1 (Porf1) (Rattus norvegicus (Rat)).